Consider the following 688-residue polypeptide: Elongation factor G (688 aa).

The tr-type G domain maps to 8-282 (EKFRNFGIMA…GVVDYLPSPL (275 aa)). GTP is bound by residues 17–24 (AHIDAGKT), 81–85 (DTPGH), and 135–138 (NKMD).

This sequence belongs to the TRAFAC class translation factor GTPase superfamily. Classic translation factor GTPase family. EF-G/EF-2 subfamily.

Its subcellular location is the cytoplasm. Functionally, catalyzes the GTP-dependent ribosomal translocation step during translation elongation. During this step, the ribosome changes from the pre-translocational (PRE) to the post-translocational (POST) state as the newly formed A-site-bound peptidyl-tRNA and P-site-bound deacylated tRNA move to the P and E sites, respectively. Catalyzes the coordinated movement of the two tRNA molecules, the mRNA and conformational changes in the ribosome. The sequence is that of Elongation factor G from Clostridium perfringens (strain ATCC 13124 / DSM 756 / JCM 1290 / NCIMB 6125 / NCTC 8237 / Type A).